Reading from the N-terminus, the 152-residue chain is S-protein homolog 4 (152 aa).

The N-terminal stretch at 1 to 23 (MTTMLKTQVHVVVIYLLIQIAFS) is a signal peptide. A glycan (N-linked (GlcNAc...) asparagine) is linked at Asn71.

Belongs to the plant self-incompatibility (S1) protein family.

The protein localises to the secreted. This Arabidopsis thaliana (Mouse-ear cress) protein is S-protein homolog 4.